A 1068-amino-acid chain; its full sequence is Rho family-interacting cell polarization regulator 2 (1068 aa).

Phosphoserine; in isoform occurs at positions 21 and 37. The segment at 45 to 73 is disordered; the sequence is LKKPQAKLKKMHNLGHKNNNPPKEPQPKR. Positions 48-59 are enriched in basic residues; the sequence is PQAKLKKMHNLG. The tract at residues 55–113 is involved in cell filopodia formation; it reads MHNLGHKNNNPPKEPQPKRVEEVYRALKNGLDEYLEVHQTELDKLTAQLKDMKRNSRLG. Residues 83–112 are a coiled coil; that stretch reads NGLDEYLEVHQTELDKLTAQLKDMKRNSRL. S341 is modified (phosphoserine; in isoform 2). Positions 474–491 are enriched in polar residues; sequence QNEGMDDTSSASSRNSLG. The disordered stretch occupies residues 474 to 524; it reads QNEGMDDTSSASSRNSLGEGQEPKSHLKEEDPEEPRKPASAPSEACRRQSS. Over residues 494 to 510 the composition is skewed to basic and acidic residues; the sequence is QEPKSHLKEEDPEEPRK. The residue at position 523 (S523) is a Phosphoserine; in isoform 2. The residue at position 573 (S573) is a Phosphoserine. S585 carries the phosphoserine; in isoform 2 modification. Residues 768-793 are a coiled coil; it reads VARSLLEKLSRQIQVMEKLAAVSDEN.

It belongs to the RIPOR family. As to quaternary structure, homooligomer; homooligomerization is regulated by RHOC and leads to the formation of concatemers through the association of N- and C-termini. Interacts with 14-3-3 proteins; these interactions occur during myogenic cell differentiation. Interacts with HDAC6; this interaction occurs during early myogenic differentiation and prevents HDAC6 to deacetylate tubulin. Interacts with DYSF; this interaction occurs during early myogenic differentiation. Interacts with MYOF. Interacts with RHOC. Isoform 1 and isoform 2 interact (via active GTP- or inactive GDP-bound forms) with RHOA; these interactions are direct, block the loading of GTP to RHOA and decrease upon chemokine CCL19 stimulation in primary T lymphocytes. Isoform 2 interacts (phosphorylated form) with HDAC6; this interaction induces T cell proliferation arrest. Isoform 2 interacts (phosphorylated form) with 14-3-3 proteins; these interactions induces T cell proliferation arrest. Isoform 2 interacts with 14-3-3 proteins. Isoform 2 interacts (via phosphorylated form) with YWHAB; this interaction occurs in a chemokine-dependent manner and does not compete for binding of RIPOR2 with RHOA nor blocks inhibition of RIPOR2-mediated RHOA activity. Isoform 2 interacts with YWHAE. Isoform 2 interacts with YWHAQ. Post-translationally, phosphorylated. Isoform 2 is phosphorylated in T cells. Chemokine-induced phosphorylation of isoform 2 in neutrophils occurs in a PKC- and AKT-dependent manner, resulting in RIPOR2 interaction with YWHAB and stabilization. Isoform 2 is phosphorylated by PKCA, AKT1 and MAPKAPK1A; in vitro. Acetylated during myogenic differentiation. As to expression, expressed in primary fetal mononuclear myoblast. Expressed strongly in naive T lymphocytes. Expressed weakly in activated T lymphocytes (at protein level). Expressed in blood cells and adult tissues of hematopoietic origin, such as the secondary lymphoid organs. Expressed in cytotrophoblast.

It localises to the cytoplasm. The protein localises to the cytoskeleton. The protein resides in the cell projection. It is found in the filopodium. Its subcellular location is the stereocilium. It localises to the stereocilium membrane. The protein localises to the apical cell membrane. Functionally, acts as an inhibitor of the small GTPase RHOA and plays several roles in the regulation of myoblast and hair cell differentiation, lymphocyte T proliferation and neutrophil polarization. Inhibits chemokine-induced T lymphocyte responses, such as cell adhesion, polarization and migration. Involved also in the regulation of neutrophil polarization, chemotaxis and adhesion. Required for normal development of inner and outer hair cell stereocilia within the cochlea of the inner ear. Plays a role for maintaining the structural organization of the basal domain of stereocilia. Involved in mechanosensory hair cell function. Required for normal hearing. Acts as an inhibitor of the small GTPase RHOA. Plays a role in fetal mononuclear myoblast differentiation by promoting filopodia and myotube formation. Maintains naive T lymphocytes in a quiescent state. This Homo sapiens (Human) protein is Rho family-interacting cell polarization regulator 2 (RIPOR2).